The following is a 25-amino-acid chain: Large ribosomal subunit protein uL29 (25 aa).

Belongs to the universal ribosomal protein uL29 family.

This Brevundimonas vesicularis (Pseudomonas vesicularis) protein is Large ribosomal subunit protein uL29 (rpmC).